Reading from the N-terminus, the 500-residue chain is Perfringolysin O (500 aa).

A signal peptide spans 1–28 (MIRFKKTKLIASIAMALCLFSQPVISFS). 4 beta stranded membrane passes run 189–202 (KSQI…NAKV), 209–218 (VDFNAVANNE), 287–296 (SKDVQAAFKA), and 304–316 (KNSQ…YENS). The short motif at 458-468 (ECTGLAWEWWR) is the Conserved undecapeptide element. The Cholesterol binding signature appears at 490–491 (TL).

The protein belongs to the cholesterol-dependent cytolysin family. Modeling based on cryo-EM shows a homooligomeric pore complex containing 38-44 subunits; when inserted in the host membrane.

The protein localises to the secreted. The protein resides in the host cell membrane. A cholesterol-dependent toxin that causes cytolysis by forming pores in cholesterol-containing host membranes. After binding to target membranes, the protein assembles into a pre-pore complex. A major conformational change leads to insertion in the host membrane and formation of an oligomeric pore complex. Cholesterol is required for binding to host cell membranes, membrane insertion and pore formation; cholesterol binding is mediated by a Thr-Leu pair in the C-terminus. Can be reversibly inactivated by oxidation. The polypeptide is Perfringolysin O (pfo) (Clostridium perfringens (strain 13 / Type A)).